We begin with the raw amino-acid sequence, 148 residues long: D-aminoacyl-tRNA deacylase (148 aa).

A Gly-cisPro motif, important for rejection of L-amino acids motif is present at residues 137–138 (GP).

The protein belongs to the DTD family. Homodimer.

Its subcellular location is the cytoplasm. It catalyses the reaction glycyl-tRNA(Ala) + H2O = tRNA(Ala) + glycine + H(+). The enzyme catalyses a D-aminoacyl-tRNA + H2O = a tRNA + a D-alpha-amino acid + H(+). An aminoacyl-tRNA editing enzyme that deacylates mischarged D-aminoacyl-tRNAs. Also deacylates mischarged glycyl-tRNA(Ala), protecting cells against glycine mischarging by AlaRS. Acts via tRNA-based rather than protein-based catalysis; rejects L-amino acids rather than detecting D-amino acids in the active site. By recycling D-aminoacyl-tRNA to D-amino acids and free tRNA molecules, this enzyme counteracts the toxicity associated with the formation of D-aminoacyl-tRNA entities in vivo and helps enforce protein L-homochirality. This is D-aminoacyl-tRNA deacylase from Latilactobacillus sakei subsp. sakei (strain 23K) (Lactobacillus sakei subsp. sakei).